The sequence spans 336 residues: Terephthalate 1,2-dioxygenase, reductase component 1 (336 aa).

A 2Fe-2S ferredoxin-type domain is found at 3–91 (HQIHIHDSDI…DIRIQPSSFR (89 aa)). [2Fe-2S] cluster-binding residues include cysteine 37, cysteine 42, cysteine 45, and cysteine 75. Residues 98 to 197 (RKRFTAKVYS…ELPFGSIALK (100 aa)) form the FAD-binding FR-type domain.

As to quaternary structure, monomer. Part of a multicomponent enzyme system composed of a reductase (TphA1I or TphA1II) and a two-subunit oxygenase component (TphA2I or TphA2II and TphA3I or TphA3II). It depends on FAD as a cofactor. The cofactor is [2Fe-2S] cluster.

The enzyme catalyses terephthalate + NADH + O2 + H(+) = (3S,4R)-3,4-dihydroxycyclohexa-1,5-diene-1,4-dicarboxylate + NAD(+). Functionally, component of the terephthalate 1,2-dioxygenase multicomponent enzyme system which catalyzes the dioxygenation of terephthalate (TER/TPA) to 1,2-dihydroxy-3,5-cyclohexadiene-1,4-dicarboxylic acid (DCD). TphA1 probably reduces TphA2A3. It can also use 2,5-dicarboxypyridine (PDC) and 1,4-napthalenedicarboxylic acid (NDC) as substrates, and preferentially uses NADPH which is the physiological electron donor. The chain is Terephthalate 1,2-dioxygenase, reductase component 1 (tphA1I) from Comamonas sp.